The sequence spans 156 residues: Ribosomal RNA large subunit methyltransferase H (156 aa).

Residues Leu-73, Gly-104, and 123–128 contribute to the S-adenosyl-L-methionine site; that span reads LSALTL.

Belongs to the RNA methyltransferase RlmH family. In terms of assembly, homodimer.

Its subcellular location is the cytoplasm. The enzyme catalyses pseudouridine(1915) in 23S rRNA + S-adenosyl-L-methionine = N(3)-methylpseudouridine(1915) in 23S rRNA + S-adenosyl-L-homocysteine + H(+). Functionally, specifically methylates the pseudouridine at position 1915 (m3Psi1915) in 23S rRNA. The protein is Ribosomal RNA large subunit methyltransferase H of Shewanella loihica (strain ATCC BAA-1088 / PV-4).